We begin with the raw amino-acid sequence, 382 residues long: Na(+)/H(+) antiporter NhaA (382 aa).

11 helical membrane-spanning segments follow: residues 14–34, 49–69, 87–107, 117–137, 146–166, 171–191, 205–225, 247–267, 285–305, 321–341, and 356–376; these read AGGILLVIAAAIAMIIANSSF, MSVSHWINDGLMAVFFLLIGL, IFPAIAAVGGMLAPALVYVAF, GWAIPAATDIAFALGIMALLG, VFLLALAIIDDLGVVVIIAFF, LSVLALVIGFVMTGILFLLNS, FILWVSVLQSGVHATLAGVVL, ALHPYVAFGILPLFAFANAGI, VALGLFLGKPLGIFSFSYVAV, IFAVSVLCGIGFTMSIFISSL, and LGILMGSTLAAVVGYILLHIS.

Belongs to the NhaA Na(+)/H(+) (TC 2.A.33) antiporter family.

The protein resides in the cell inner membrane. It carries out the reaction Na(+)(in) + 2 H(+)(out) = Na(+)(out) + 2 H(+)(in). Functionally, na(+)/H(+) antiporter that extrudes sodium in exchange for external protons. The protein is Na(+)/H(+) antiporter NhaA of Aliivibrio salmonicida (strain LFI1238) (Vibrio salmonicida (strain LFI1238)).